Reading from the N-terminus, the 506-residue chain is Apolipoprotein N-acyltransferase (506 aa).

7 helical membrane passes run 10-30 (ANAK…AGWG), 33-53 (LALP…PLWW), 57-77 (VLAP…FYGS), 105-125 (IWLC…LLMA), 139-159 (WGVT…LWWI), 176-196 (LAGP…VTLS), and 205-225 (VGLA…SVRV). One can recognise a CN hydrolase domain in the interval 238–473 (IQGNIPTREK…FVIYAATIFR (236 aa)). Glu279 serves as the catalytic Proton acceptor. The active site involves Lys336. Cys385 functions as the Nucleophile in the catalytic mechanism. Residues 483-500 (YGDWLLPLLLGMLSLSVL) form a helical membrane-spanning segment.

This sequence belongs to the CN hydrolase family. Apolipoprotein N-acyltransferase subfamily.

The protein localises to the cell inner membrane. It carries out the reaction N-terminal S-1,2-diacyl-sn-glyceryl-L-cysteinyl-[lipoprotein] + a glycerophospholipid = N-acyl-S-1,2-diacyl-sn-glyceryl-L-cysteinyl-[lipoprotein] + a 2-acyl-sn-glycero-3-phospholipid + H(+). It functions in the pathway protein modification; lipoprotein biosynthesis (N-acyl transfer). Catalyzes the phospholipid dependent N-acylation of the N-terminal cysteine of apolipoprotein, the last step in lipoprotein maturation. The sequence is that of Apolipoprotein N-acyltransferase from Thermosynechococcus vestitus (strain NIES-2133 / IAM M-273 / BP-1).